The chain runs to 585 residues: Amyloid protein-binding protein 2 (585 aa).

TPR repeat units follow at residues 50–83 (QGRL…HHCF), 120–153 (IQVG…CTLH), 206–239 (AALY…ITSG), 288–321 (SDTL…RQSV), 333–367 (HEDL…ITHI), 429–462 (AKHY…KEQL), 471–505 (ALSV…GKKL), and 514–547 (EYDY…NRLR).

Component of a CRL2 E3 ubiquitin-protein ligase complex, also named ECS (Elongin BC-CUL2/5-SOCS-box protein) complex, composed of CUL2, Elongin BC (ELOB and ELOC), RBX1 and substrate-specific adapter APPBP2. Interacts with APP; APP interaction inhibits the E3 ubiquitin-protein ligase activity of the CRL2(APPBP2) complex. Rapidly degraded by the proteasome upon overexpression of a C-terminal fragment of APP.

The protein localises to the nucleus. The protein resides in the cytoplasm. It is found in the cytoskeleton. It localises to the membrane. Its pathway is protein modification; protein ubiquitination. E3 ubiquitin-protein ligase activity of the CRL2(APPBP2) complex is inhibited by APP. Substrate-recognition component of a Cul2-RING (CRL2) E3 ubiquitin-protein ligase complex of the DesCEND (destruction via C-end degrons) pathway, which recognizes a C-degron located at the extreme C terminus of target proteins, leading to their ubiquitination and degradation. The C-degron recognized by the DesCEND pathway is usually a motif of less than ten residues and can be present in full-length proteins, truncated proteins or proteolytically cleaved forms. The CRL2(APPBP2) complex specifically recognizes proteins with a -Arg-Xaa-Xaa-Gly degron at the C-terminus, leading to their ubiquitination and degradation. The CRL2(APPBP2) complex mediates ubiquitination and degradation of truncated SELENOV selenoproteins produced by failed UGA/Sec decoding, which end with a -Arg-Xaa-Xaa-Gly degron. May play a role in intracellular protein transport: may be involved in the translocation of APP along microtubules toward the cell surface. The sequence is that of Amyloid protein-binding protein 2 from Rattus norvegicus (Rat).